Consider the following 148-residue polypeptide: uncharacterized protein (148 aa).

Residues 1 to 144 (MNIKRITTEA…PHVLMTKEIS (144 aa)) enclose the N-acetyltransferase domain.

This is an uncharacterized protein from Bacillus subtilis (strain 168).